The primary structure comprises 300 residues: GTPase Era (300 aa).

In terms of domain architecture, Era-type G spans 7–182; the sequence is YCGFIAIVGR…LRKGVHHFPE (176 aa). The G1 stretch occupies residues 15–22; sequence GRPNVGKS. Position 15–22 (15–22) interacts with GTP; sequence GRPNVGKS. Positions 41–45 are G2; the sequence is QTTRH. The interval 62 to 65 is G3; the sequence is DTPG. Residues 62 to 66 and 124 to 127 contribute to the GTP site; these read DTPGL and NKVD. The G4 stretch occupies residues 124-127; the sequence is NKVD. Residues 154–156 are G5; that stretch reads ISA. Residues 206–283 enclose the KH type-2 domain; sequence TGEELPYSVT…HLELWVKVKS (78 aa).

Belongs to the TRAFAC class TrmE-Era-EngA-EngB-Septin-like GTPase superfamily. Era GTPase family. In terms of assembly, monomer.

It localises to the cytoplasm. It is found in the cell inner membrane. Functionally, an essential GTPase that binds both GDP and GTP, with rapid nucleotide exchange. Plays a role in 16S rRNA processing and 30S ribosomal subunit biogenesis and possibly also in cell cycle regulation and energy metabolism. The sequence is that of GTPase Era from Histophilus somni (strain 129Pt) (Haemophilus somnus).